A 1373-amino-acid chain; its full sequence is DNA-directed RNA polymerase subunit beta (1373 aa).

The protein belongs to the RNA polymerase beta chain family. The RNAP catalytic core consists of 2 alpha, 1 beta, 1 beta' and 1 omega subunit. When a sigma factor is associated with the core the holoenzyme is formed, which can initiate transcription.

The catalysed reaction is RNA(n) + a ribonucleoside 5'-triphosphate = RNA(n+1) + diphosphate. Its function is as follows. DNA-dependent RNA polymerase catalyzes the transcription of DNA into RNA using the four ribonucleoside triphosphates as substrates. The polypeptide is DNA-directed RNA polymerase subunit beta (Rickettsia peacockii (strain Rustic)).